An 860-amino-acid polypeptide reads, in one-letter code: Protein translocase subunit SecA (860 aa).

ATP contacts are provided by residues glutamine 87, 105–109 (GEGKT), and aspartate 514. 4 residues coordinate Zn(2+): cysteine 846, cysteine 848, cysteine 857, and cysteine 858.

Belongs to the SecA family. Monomer and homodimer. Part of the essential Sec protein translocation apparatus which comprises SecA, SecYEG and auxiliary proteins SecDF. Other proteins may also be involved. The cofactor is Zn(2+).

It localises to the cell membrane. Its subcellular location is the cytoplasm. It carries out the reaction ATP + H2O + cellular proteinSide 1 = ADP + phosphate + cellular proteinSide 2.. Part of the Sec protein translocase complex. Interacts with the SecYEG preprotein conducting channel. Has a central role in coupling the hydrolysis of ATP to the transfer of proteins into and across the cell membrane, serving as an ATP-driven molecular motor driving the stepwise translocation of polypeptide chains across the membrane. This chain is Protein translocase subunit SecA, found in Endomicrobium trichonymphae.